The chain runs to 283 residues: Polyamine aminopropyltransferase (283 aa).

The PABS domain maps to 2–238 (ELWYTEEWTE…GHWLFGFASK (237 aa)). Residue Gln-31 participates in S-methyl-5'-thioadenosine binding. Positions 62 and 86 each coordinate spermidine. Residues Glu-106 and 137-138 (DG) each bind S-methyl-5'-thioadenosine. Asp-156 acts as the Proton acceptor in catalysis. 156–159 (DSTD) provides a ligand contact to spermidine. Pro-163 lines the S-methyl-5'-thioadenosine pocket.

It belongs to the spermidine/spermine synthase family. As to quaternary structure, homodimer or homotetramer.

The protein localises to the cytoplasm. The catalysed reaction is S-adenosyl 3-(methylsulfanyl)propylamine + putrescine = S-methyl-5'-thioadenosine + spermidine + H(+). Its pathway is amine and polyamine biosynthesis; spermidine biosynthesis; spermidine from putrescine: step 1/1. In terms of biological role, catalyzes the irreversible transfer of a propylamine group from the amino donor S-adenosylmethioninamine (decarboxy-AdoMet) to putrescine (1,4-diaminobutane) to yield spermidine. This is Polyamine aminopropyltransferase from Clostridioides difficile (strain 630) (Peptoclostridium difficile).